We begin with the raw amino-acid sequence, 75 residues long: Guanine nucleotide-binding protein G(I)/G(S)/G(O) subunit gamma-4 (75 aa).

Cys-72 is modified (cysteine methyl ester). A lipid anchor (S-geranylgeranyl cysteine) is attached at Cys-72. A propeptide spans 73–75 (TIL) (removed in mature form).

The protein belongs to the G protein gamma family. G proteins are composed of 3 units, alpha, beta and gamma. Interacts with beta-1 and beta-2, but not with beta-3. Interacts with KCNK1. Interacts (via C-terminus) with KCNK2/TREK-1 (via N-terminus); this interaction confers ion selectivity to Cl(-) and L-glutamate. As to expression, brain.

Its subcellular location is the cell membrane. Its function is as follows. Guanine nucleotide-binding proteins (G proteins) are involved as a modulator or transducer in various transmembrane signaling systems. The beta and gamma chains are required for the GTPase activity, for replacement of GDP by GTP, and for G protein-effector interaction. In Mus musculus (Mouse), this protein is Guanine nucleotide-binding protein G(I)/G(S)/G(O) subunit gamma-4 (Gng4).